Consider the following 114-residue polypeptide: rRNA-processing protein cgrA (114 aa).

Residues 1-13 (MSSAAPAPSTHAA) are compositionally biased toward low complexity. 2 disordered regions span residues 1–47 (MSSA…AARK) and 77–114 (RRAAKEEKERYEKMAEKMHRKRVERLKKREKRNKLLNS). A coiled-coil region spans residues 40–101 (TKRAAARKEQ…EKMHRKRVER (62 aa)). The segment covering 77 to 93 (RRAAKEEKERYEKMAEK) has biased composition (basic and acidic residues). Residues 94–114 (MHRKRVERLKKREKRNKLLNS) show a composition bias toward basic residues.

Belongs to the CGR1 family.

Its subcellular location is the nucleus. The protein localises to the nucleolus. Involved in nucleolar integrity and required for processing of the pre-rRNA for the 60S ribosome subunit. The protein is rRNA-processing protein cgrA (cgrA) of Emericella nidulans (strain FGSC A4 / ATCC 38163 / CBS 112.46 / NRRL 194 / M139) (Aspergillus nidulans).